We begin with the raw amino-acid sequence, 113 residues long: U11-theraphotoxin-Hhn1p (113 aa).

The signal sequence occupies residues 1-21 (MNTVRVTFLLVFVLAVSLGQA). Residues 22-74 (DKDENRMEMQEKTEQGKSYLDFAENLLLQKLEELEAKLLEEDSEESRNSRQKR) constitute a propeptide that is removed on maturation. Residues 61–83 (EEDSEESRNSRQKRCIGEGVPCD) are disordered. 3 disulfide bridges follow: C75/C90, C82/C95, and C89/C110.

Belongs to the neurotoxin 14 (magi-1) family. 01 (HNTX-16) subfamily. In terms of tissue distribution, expressed by the venom gland.

Its subcellular location is the secreted. Its function is as follows. Probable ion channel inhibitor. The protein is U11-theraphotoxin-Hhn1p of Cyriopagopus hainanus (Chinese bird spider).